Consider the following 254-residue polypeptide: 2,3-bisphosphoglycerate-dependent phosphoglycerate mutase (254 aa).

Residues 15-22 (RHGQSEWN), 28-29 (TG), arginine 67, 94-97 (ERHY), lysine 105, 121-122 (RR), and 188-189 (GN) contribute to the substrate site. Residue histidine 16 is the Tele-phosphohistidine intermediate of the active site. Glutamate 94 serves as the catalytic Proton donor/acceptor.

This sequence belongs to the phosphoglycerate mutase family. BPG-dependent PGAM subfamily.

The enzyme catalyses (2R)-2-phosphoglycerate = (2R)-3-phosphoglycerate. Its pathway is carbohydrate degradation; glycolysis; pyruvate from D-glyceraldehyde 3-phosphate: step 3/5. Catalyzes the interconversion of 2-phosphoglycerate and 3-phosphoglycerate. The polypeptide is 2,3-bisphosphoglycerate-dependent phosphoglycerate mutase (Corynebacterium jeikeium (strain K411)).